Consider the following 224-residue polypeptide: ATP-dependent Clp protease proteolytic subunit 1 (224 aa).

Ser120 (nucleophile) is an active-site residue. The active site involves His145.

It belongs to the peptidase S14 family. In terms of assembly, fourteen ClpP subunits assemble into 2 heptameric rings which stack back to back to give a disk-like structure with a central cavity, resembling the structure of eukaryotic proteasomes.

The protein resides in the cytoplasm. The enzyme catalyses Hydrolysis of proteins to small peptides in the presence of ATP and magnesium. alpha-casein is the usual test substrate. In the absence of ATP, only oligopeptides shorter than five residues are hydrolyzed (such as succinyl-Leu-Tyr-|-NHMec, and Leu-Tyr-Leu-|-Tyr-Trp, in which cleavage of the -Tyr-|-Leu- and -Tyr-|-Trp bonds also occurs).. Cleaves peptides in various proteins in a process that requires ATP hydrolysis. Has a chymotrypsin-like activity. Plays a major role in the degradation of misfolded proteins. This chain is ATP-dependent Clp protease proteolytic subunit 1, found in Prochlorococcus marinus (strain MIT 9313).